The primary structure comprises 119 residues: Protein yippee-like 2 (119 aa).

A Yippee domain is found at 19–116 (RTYSCIHCRA…IELAHMIKDN (98 aa)). Residues C23, C26, C79, and C82 each coordinate Zn(2+).

The protein belongs to the yippee family. As to quaternary structure, may interact with FAM168B.

The protein resides in the nucleus. It localises to the nucleolus. This chain is Protein yippee-like 2 (YPEL2), found in Chlorocebus aethiops (Green monkey).